Here is a 443-residue protein sequence, read N- to C-terminus: Chromosomal replication initiator protein DnaA (443 aa).

The interval methionine 1–arginine 73 is domain I, interacts with DnaA modulators. Residues arginine 73 to serine 106 form a domain II region. Positions threonine 107–alanine 323 are domain III, AAA+ region. ATP contacts are provided by glycine 151, glycine 153, lysine 154, and threonine 155. The domain IV, binds dsDNA stretch occupies residues threonine 324–tyrosine 443.

Belongs to the DnaA family. As to quaternary structure, oligomerizes as a right-handed, spiral filament on DNA at oriC.

It is found in the cytoplasm. Functionally, plays an essential role in the initiation and regulation of chromosomal replication. ATP-DnaA binds to the origin of replication (oriC) to initiate formation of the DNA replication initiation complex once per cell cycle. Binds the DnaA box (a 9 base pair repeat at the origin) and separates the double-stranded (ds)DNA. Forms a right-handed helical filament on oriC DNA; dsDNA binds to the exterior of the filament while single-stranded (ss)DNA is stabiized in the filament's interior. The ATP-DnaA-oriC complex binds and stabilizes one strand of the AT-rich DNA unwinding element (DUE), permitting loading of DNA polymerase. After initiation quickly degrades to an ADP-DnaA complex that is not apt for DNA replication. Binds acidic phospholipids. This Caldanaerobacter subterraneus subsp. tengcongensis (strain DSM 15242 / JCM 11007 / NBRC 100824 / MB4) (Thermoanaerobacter tengcongensis) protein is Chromosomal replication initiator protein DnaA.